The chain runs to 420 residues: Protein disulfide isomerase Creld1 (420 aa).

Residues 1–29 form the signal peptide; that stretch reads MAPQPLRGLVPFLLWCLSLFLSLPGPVWL. Topologically, residues 30–362 are extracellular; the sequence is QPSPPPHSAP…GFFAEMTEDE (333 aa). Residues 46 to 49 carry the CXXC motif; that stretch reads CHTC. 4 disulfides stabilise this stretch: C46/C49, C155/C169, C163/C181, and C183/C192. Residues 153–193 form the EGF-like 1 domain; the sequence is LPCPGGTERPCGGYGQCEGEGTRGGSGHCDCQAGYGGEACG. N-linked (GlcNAc...) asparagine glycosylation is present at N205. FU repeat units lie at residues 208-255 and 268-315; these read HLVC…EQAT and SYEC…VVCP. The CXXC motif lies at 278 to 281; sequence CLGC. 4 disulfide bridges follow: C278/C281, C309/C321, C314/C330, and C332/C343. Residues 305–342 form the EGF-like 2; calcium-binding domain; sequence DVDECETVVCPGENEQCENTEGSYRCVCAEGFRQEDGI. The chain crosses the membrane as a helical span at residues 363-383; that stretch reads MVVLQQMFFGVIICALATLAA. A topological domain (cytoplasmic) is located at residue K384. Residues 385-405 traverse the membrane as a helical segment; that stretch reads GDLVFTAIFIGAVAAMTGYWL. The Extracellular segment spans residues 406-420; it reads SERSDRVLEGFIKGR.

It belongs to the CRELD family.

It localises to the membrane. The enzyme catalyses Catalyzes the rearrangement of -S-S- bonds in proteins.. In terms of biological role, protein disulfide isomerase. Promotes the localization of acetylcholine receptors (AChRs) to the plasma membrane. This Rattus norvegicus (Rat) protein is Protein disulfide isomerase Creld1 (Creld1).